The following is a 245-amino-acid chain: Chymotrypsin B (245 aa).

Cystine bridges form between Cys-1-Cys-121, Cys-42-Cys-58, Cys-135-Cys-201, Cys-167-Cys-182, and Cys-191-Cys-220. A propeptide spanning residues 14 to 15 (AR) is cleaved from the precursor. Positions 16–243 (IVNGEEAVPH…LRGWVDQILA (228 aa)) constitute a Peptidase S1 domain. Residues His-57 and Asp-101 each act as charge relay system in the active site. Residue Ser-195 is the Charge relay system of the active site.

The protein belongs to the peptidase S1 family.

It is found in the secreted. Its subcellular location is the extracellular space. The catalysed reaction is Preferential cleavage: Tyr-|-Xaa, Trp-|-Xaa, Phe-|-Xaa, Leu-|-Xaa.. The protein is Chymotrypsin B of Gadus morhua (Atlantic cod).